Consider the following 88-residue polypeptide: U18-hexatoxin-Hi1a (88 aa).

A signal peptide spans 1–17; it reads MRIYSLLILSFLLLASA. Positions 18–47 are excised as a propeptide; sequence VLINSAEMPRSEKSLLYSIMQGREDSEEGR. Disulfide bonds link Cys48–Cys63, Cys55–Cys69, Cys62–Cys81, and Cys71–Cys79.

This sequence belongs to the neurotoxin 07 (Beta/delta-agtx) family. 02 (aga-3) subfamily. Expressed by the venom gland.

The protein resides in the secreted. Weak insecticidal toxin with probable ion channel impairing activity. In vivo, induces paralysis when injected into sheep blowflies (L.cuprina). Shows weak toxicity, since it is only toxic at high doses, and flies recover within 24 hours. In Hadronyche infensa (Fraser island funnel-web spider), this protein is U18-hexatoxin-Hi1a.